The chain runs to 350 residues: tRNA uridine(34) hydroxylase (350 aa).

Residues aspartate 146–leucine 240 enclose the Rhodanese domain. Cysteine 200 acts as the Cysteine persulfide intermediate in catalysis.

It belongs to the TrhO family.

It carries out the reaction uridine(34) in tRNA + AH2 + O2 = 5-hydroxyuridine(34) in tRNA + A + H2O. Catalyzes oxygen-dependent 5-hydroxyuridine (ho5U) modification at position 34 in tRNAs. In Shigella dysenteriae serotype 1 (strain Sd197), this protein is tRNA uridine(34) hydroxylase.